A 628-amino-acid polypeptide reads, in one-letter code: Putative lipase ATG15 (628 aa).

Over 1 to 32 (MLAAEKRRLLHKTRPVSASEKPGSIYPQRALY) the chain is Cytoplasmic. A helical; Signal-anchor for type II membrane protein transmembrane segment spans residues 33–53 (LLVCFSIATISLGYLHFIGAI). Residues 54–628 (DIGRFGISSV…GYDGDVDDDQ (575 aa)) lie on the Lumenal side of the membrane. Asn261, Asn299, and Asn383 each carry an N-linked (GlcNAc...) asparagine glycan. Ser401 serves as the catalytic Charge relay system. Asn518 is a glycosylation site (N-linked (GlcNAc...) asparagine). The segment at 540-605 (HDDDVPDEPE…ISEPSESPKK (66 aa)) is disordered. A compositionally biased stretch (low complexity) spans 562–586 (PSSSTSDGKNNRISSTATTTISPTS). Residues 591–600 (PTSSDISEPS) are compositionally biased toward polar residues.

Belongs to the AB hydrolase superfamily. Lipase family. In terms of assembly, binds to both phosphatidylinositol (PI) and phosphatidylinositol 3,5-bisphosphate (PIP2).

Its subcellular location is the endosome. It localises to the multivesicular body membrane. It is found in the prevacuolar compartment membrane. It catalyses the reaction a triacylglycerol + H2O = a diacylglycerol + a fatty acid + H(+). In terms of biological role, lipase which is essential for lysis of subvacuolar cytoplasm to vacuole targeted bodies and intravacuolar autophagic bodies. Involved in the lysis of intravacuolar multivesicular body (MVB) vesicles. The intravacuolar membrane disintegration by ATG15 is critical to life span extension. This is Putative lipase ATG15 (ATG15) from Scheffersomyces stipitis (strain ATCC 58785 / CBS 6054 / NBRC 10063 / NRRL Y-11545) (Yeast).